The primary structure comprises 552 residues: Ribosomal lysine N-methyltransferase 3 (552 aa).

The SET domain occupies 26–335 (SKCDIRESPL…QGQEIFNSYG (310 aa)). Tyrosine 334 contacts S-adenosyl-L-methionine. Residues 399–432 (EDEEDEDGQAKSDNLSDDIESEEEEEEEEGDDSL) form a disordered region. Residues 413–432 (LSDDIESEEEEEEEEGDDSL) show a composition bias toward acidic residues.

It belongs to the class V-like SAM-binding methyltransferase superfamily.

It is found in the nucleus. S-adenosyl-L-methionine-dependent protein-lysine N-methyltransferase that monomethylates 60S ribosomal protein L42 (RPL42A and RPL42B) at 'Lys-40'. The polypeptide is Ribosomal lysine N-methyltransferase 3 (Saccharomyces cerevisiae (strain ATCC 204508 / S288c) (Baker's yeast)).